Consider the following 292-residue polypeptide: 3-methyl-2-oxobutanoate hydroxymethyltransferase 2 (292 aa).

Mg(2+)-binding residues include Asp-52 and Asp-91. Residues 52-53 (DS), Asp-91, and Lys-120 each bind 3-methyl-2-oxobutanoate. Glu-122 contributes to the Mg(2+) binding site. Glu-189 acts as the Proton acceptor in catalysis.

Belongs to the PanB family. Homodecamer; pentamer of dimers. Mg(2+) is required as a cofactor.

Its subcellular location is the cytoplasm. The enzyme catalyses 3-methyl-2-oxobutanoate + (6R)-5,10-methylene-5,6,7,8-tetrahydrofolate + H2O = 2-dehydropantoate + (6S)-5,6,7,8-tetrahydrofolate. It functions in the pathway cofactor biosynthesis; (R)-pantothenate biosynthesis; (R)-pantoate from 3-methyl-2-oxobutanoate: step 1/2. Catalyzes the reversible reaction in which hydroxymethyl group from 5,10-methylenetetrahydrofolate is transferred onto alpha-ketoisovalerate to form ketopantoate. The protein is 3-methyl-2-oxobutanoate hydroxymethyltransferase 2 of Bradyrhizobium diazoefficiens (strain JCM 10833 / BCRC 13528 / IAM 13628 / NBRC 14792 / USDA 110).